We begin with the raw amino-acid sequence, 887 residues long: Integrator complex subunit 6 (887 aa).

One can recognise a VWFA domain in the interval 3–227; the sequence is ILLFLIDTSA…QCLESLVQKV (225 aa). The Inhibitory loop signature appears at 626-633; sequence MMIDEADE. Ser804 carries the post-translational modification Phosphoserine.

It belongs to the Integrator subunit 6 family. As to quaternary structure, component of the Integrator complex, composed of core subunits INTS1, INTS2, INTS3, INTS4, INTS5, INTS6, INTS7, INTS8, INTS9/RC74, INTS10, INTS11/CPSF3L, INTS12, INTS13, INTS14 and INTS15. The core complex associates with protein phosphatase 2A subunits PPP2CA and PPP2R1A, to form the Integrator-PP2A (INTAC) complex. As to expression, widely expressed. Expressed in heart, brain, placenta, lung, liver, skeletal muscle, kidney and pancreas.

The protein localises to the nucleus. Its subcellular location is the chromosome. Its function is as follows. Component of the integrator complex, a multiprotein complex that terminates RNA polymerase II (Pol II) transcription in the promoter-proximal region of genes. The integrator complex provides a quality checkpoint during transcription elongation by driving premature transcription termination of transcripts that are unfavorably configured for transcriptional elongation: the complex terminates transcription by (1) catalyzing dephosphorylation of the C-terminal domain (CTD) of Pol II subunit POLR2A and SUPT5H/SPT5, (2) degrading the exiting nascent RNA transcript via endonuclease activity and (3) promoting the release of Pol II from bound DNA. The integrator complex is also involved in terminating the synthesis of non-coding Pol II transcripts, such as enhancer RNAs (eRNAs), small nuclear RNAs (snRNAs), telomerase RNAs and long non-coding RNAs (lncRNAs). Within the integrator complex, INTS6 acts as a molecular adapter that promotes assembly of protein phosphatase 2A (PP2A) subunits to the integrator core complex, promoting recruitment of PP2A to transcription pause-release checkpoint. Mediates recruitment of cytoplasmic dynein to the nuclear envelope, probably as component of the integrator complex. May have a tumor suppressor role; an ectopic expression suppressing tumor cell growth. This chain is Integrator complex subunit 6, found in Homo sapiens (Human).